Here is a 142-residue protein sequence, read N- to C-terminus: Galactose-6-phosphate isomerase subunit LacA (142 aa).

This sequence belongs to the LacAB/RpiB family. Heteromultimeric protein consisting of LacA and LacB.

The catalysed reaction is aldehydo-D-galactose 6-phosphate = keto-D-tagatose 6-phosphate. The protein operates within carbohydrate metabolism; D-galactose 6-phosphate degradation; D-tagatose 6-phosphate from D-galactose 6-phosphate: step 1/1. The protein is Galactose-6-phosphate isomerase subunit LacA of Staphylococcus epidermidis (strain ATCC 35984 / DSM 28319 / BCRC 17069 / CCUG 31568 / BM 3577 / RP62A).